A 516-amino-acid chain; its full sequence is Protein phosphatase 1H (516 aa).

Disordered stretches follow at residues 102–122 and 181–202; these read ADPS…PSGD and PPTC…SGSQ. The region spanning 106–506 is the PPM-type phosphatase domain; it reads SVSYTPSRRR…DDISVFIIPL (401 aa). The segment covering 190–202 has biased composition (polar residues); sequence PNPQLHASASGSQ.

The protein belongs to the PP2C family.

Its subcellular location is the nucleus. It localises to the cytoplasm. The catalysed reaction is O-phospho-L-seryl-[protein] + H2O = L-seryl-[protein] + phosphate. The enzyme catalyses O-phospho-L-threonyl-[protein] + H2O = L-threonyl-[protein] + phosphate. The sequence is that of Protein phosphatase 1H (ppm1h) from Danio rerio (Zebrafish).